A 1262-amino-acid polypeptide reads, in one-letter code: MIEFWKSEYTRILSICHDSGTQYRNKNVRMRSLYLEKVWVAFKSFAYWKEVIWKTKQEFRAQYSFPKTSLEANKVDDANTHSPKFVMEVIDVFVENLNDLMKINDPSSWLFVPGHMKEQIEKVLKELKLLRFFVCFVSNKCIQPQYQHTTFYTHALIEASHNAMVVWLHLPVYGIGNQDLAPSEVSRLLSDFMEMKIKSIQPGISRNSIYIDVLQALKSTIPQAQQKHVAESGIVEIPTHSLTVGLSDQMANLQEMLCLLRDNLIHLPILDLEFHLQDMDSVIVDAGLLIYSLYDIKGEKEDTILEDIKRELGFDLPRNIEPIKVMVYLVMQKAFQCNLPRIHGLGYVDFLLKNLKDFQGRYSDSLAFLKNQLQVIQTKFESMQPFLKVVVEEPHNKLKTLNEDCATQIIRKAYEVEYVVDACINKEVPQWCIERWLLDIIEEITCIKEKIQEKNTVEDTMKSVIASSQLARTPRMNEEIVGFEDVIETLRKKLLNGTKGQDVISMHGMPGLGKTTLANRLYSDRSVVSQFDICAQCCVSQVYSYKDLLLALLRDAIGEGSVRTELHANELADMLRKTLLPRRYLILVDDVWENSVWDDLSGCFPDVNNRSRIILTTRHHEVAKYASVHSDPLHLRMFDEVESWKLLEKKVFGEESCSPLLRDIGQRIAKMCGQLPLSIVLVAGILSEMEKEVECWEQVANNLGTHIHNDSRAVVDQSYHVLPCHLKSCFLYFGAFLEDRVIDIPRLIRLWISESFIKSCEGRSLEDIAEGYLENLIGRNLVMVTQRDDSDGKVKACRLHDVLLDFCKERAAEENFLLWINRDQITKPSSCVYSHNQHAHLAFTDMKNLVEWSASCSCVGSVLFKNYDPYFAGRPLSSHAFSISRILLNFKFLKVLDLEHQVVIDSIPTELFYLRYISAHIEQNSIPSSISNLWNLETLILNRTSAATGKTLLLPSTVWDMVKLRHLHIPKFSPENKKALLENSARLDDLETLFNPYFTRVEDAELMLRKTPNLRKLICEVQCLEYPHQYHVLNFPIRLEMLKLHQSNIFKPISFCISAPNLKYLELSGFYLDSQYLSETADHLKHLEVLKLYYVEFGDHREWKVSNGMFPQLKILKLKCVSLLKWIVADDAFPNLEQLVLRRCRHLMEIPSCFMDILSLQYIEVENCNESVVKSAMNIQETQVEDNQNTNFKLVLIEIHLFCLFDMKGIESISTDMKEKKLTVTRDVDADEVQLVVEKLRNVAYADEVQLVVEKLRKRGML.

2 coiled-coil regions span residues D364–Q384 and R475–N496. Positions R475 to E761 constitute an NB-ARC domain. G508–T515 contacts ATP. LRR repeat units follow at residues F890 to L914, L933 to M961, P1036 to A1059, Y1064 to H1083, L1084 to Q1112, and F1133 to I1157. In terms of domain architecture, HMA spans E1181–E1248.

The protein belongs to the disease resistance NB-LRR family.

It localises to the cytoplasm. The protein resides in the membrane. Confers resistance to late blight (Phytophthora infestans) races carrying the avirulence gene Avr1. Resistance proteins guard the plant against pathogens that contain an appropriate avirulence protein via an indirect interaction with this avirulence protein. That triggers a defense system including the hypersensitive response, which restricts the pathogen growth. This is Putative late blight resistance protein homolog R1B-23 (R1B-23) from Solanum demissum (Wild potato).